We begin with the raw amino-acid sequence, 187 residues long: Large ribosomal subunit protein uL5 (187 aa).

This sequence belongs to the universal ribosomal protein uL5 family. Part of the 50S ribosomal subunit; part of the 5S rRNA/L5/L18/L25 subcomplex. Contacts the 5S rRNA and the P site tRNA. Forms a bridge to the 30S subunit in the 70S ribosome.

This is one of the proteins that bind and probably mediate the attachment of the 5S RNA into the large ribosomal subunit, where it forms part of the central protuberance. In the 70S ribosome it contacts protein S13 of the 30S subunit (bridge B1b), connecting the 2 subunits; this bridge is implicated in subunit movement. Contacts the P site tRNA; the 5S rRNA and some of its associated proteins might help stabilize positioning of ribosome-bound tRNAs. The chain is Large ribosomal subunit protein uL5 from Corynebacterium diphtheriae (strain ATCC 700971 / NCTC 13129 / Biotype gravis).